Here is a 578-residue protein sequence, read N- to C-terminus: Zinc finger protein with KRAB and SCAN domains 8 (578 aa).

The tract at residues 1 to 20 (MAEESRKPSAPSPPDQTPEE) is disordered. Ser-12 is modified (phosphoserine). A Glycyl lysine isopeptide (Lys-Gly) (interchain with G-Cter in SUMO2) cross-link involves residue Lys-26. Residues 51-133 (RLRFRQLRYQ…TLLEDLERQI (83 aa)) form the SCAN box domain. Residues 158–205 (ASAPEPPNTQLQSEATQHKSPVPQESQERAMSTSQSPTRSQKGSSGDQ) form a disordered region. Polar residues predominate over residues 165–205 (NTQLQSEATQHKSPVPQESQERAMSTSQSPTRSQKGSSGDQ). Residues Lys-176 and Lys-199 each participate in a glycyl lysine isopeptide (Lys-Gly) (interchain with G-Cter in SUMO2) cross-link. Ser-201 is modified (phosphoserine). The KRAB domain maps to 220–316 (EKIEDMAVSL…GRLERQRGNP (97 aa)). Residues Lys-221, Lys-272, and Lys-288 each participate in a glycyl lysine isopeptide (Lys-Gly) (interchain with G-Cter in SUMO2) cross-link. 2 C2H2-type zinc fingers span residues 322–344 (HKCDECGKSFAQSSGLVRHWRIH) and 350–372 (YQCNVCGKAFSYRSALLSHQDIH). Residues Lys-374 and Lys-376 each participate in a glycyl lysine isopeptide (Lys-Gly) (interchain with G-Cter in SUMO2) cross-link. 7 consecutive C2H2-type zinc fingers follow at residues 378 to 400 (YHCKECGKAFSQNTGLILHQRIH), 406 to 428 (YQCNQCGKAFSQSAGLILHQRIH), 434 to 456 (YECNECGKAFSHSSHLIGHQRIH), 462 to 484 (YECDECGKTFRRSSHLIGHQRSH), 490 to 512 (YKCNECGRAFSQKSGLIEHQRIH), 518 to 540 (YKCKECGKAFNGNTGLIQHLRIH), and 546 to 568 (YQCNECGKAFIQRSSLIRHQRIH). Glycyl lysine isopeptide (Lys-Gly) (interchain with G-Cter in SUMO2) cross-links involve residues Lys-413 and Lys-441. Residue Lys-502 forms a Glycyl lysine isopeptide (Lys-Gly) (interchain with G-Cter in SUMO2) linkage. Lys-572 participates in a covalent cross-link: Glycyl lysine isopeptide (Lys-Gly) (interchain with G-Cter in SUMO2).

Belongs to the krueppel C2H2-type zinc-finger protein family.

Its subcellular location is the nucleus. In terms of biological role, may be involved in transcriptional regulation. This chain is Zinc finger protein with KRAB and SCAN domains 8 (ZKSCAN8), found in Homo sapiens (Human).